The primary structure comprises 764 residues: 5-methyltetrahydropteroyltriglutamate--homocysteine methyltransferase (764 aa).

5-methyltetrahydropteroyltri-L-glutamate-binding positions include Arg16 to Lys19 and Lys117. L-homocysteine is bound by residues Ile442–Ser444 and Glu495. L-methionine is bound by residues Ile442 to Ser444 and Glu495. Residues Arg526 to Cys527 and Trp572 contribute to the 5-methyltetrahydropteroyltri-L-glutamate site. Asp610 serves as a coordination point for L-homocysteine. Asp610 contacts L-methionine. A 5-methyltetrahydropteroyltri-L-glutamate-binding site is contributed by Glu616. Positions 652, 654, and 676 each coordinate Zn(2+). Residue His705 is the Proton donor of the active site. Zn(2+) is bound at residue Cys737.

The protein belongs to the vitamin-B12 independent methionine synthase family. The cofactor is Zn(2+).

It catalyses the reaction 5-methyltetrahydropteroyltri-L-glutamate + L-homocysteine = tetrahydropteroyltri-L-glutamate + L-methionine. It participates in amino-acid biosynthesis; L-methionine biosynthesis via de novo pathway; L-methionine from L-homocysteine (MetE route): step 1/1. Catalyzes the transfer of a methyl group from 5-methyltetrahydrofolate to homocysteine resulting in methionine formation. The polypeptide is 5-methyltetrahydropteroyltriglutamate--homocysteine methyltransferase (Bordetella petrii (strain ATCC BAA-461 / DSM 12804 / CCUG 43448)).